The sequence spans 121 residues: MYYVACVFVYNKYIFTFEKENFVEKMNYRLRDKTFNFNQMAQKRNKQSKKPKQTSKGVKKSSKQNKNSSKNNKYQQNVLLQSIDDYNTTQSVLRSAHNSGSKMSDISNSIQLLSMTKKQEN.

Disordered regions lie at residues 38-76 (NQMA…KYQQ) and 91-121 (SVLR…KQEN). A compositionally biased stretch (basic residues) spans 43 to 63 (KRNKQSKKPKQTSKGVKKSSK). The segment covering 64-76 (QNKNSSKNNKYQQ) has biased composition (low complexity).

This is an uncharacterized protein from Schizosaccharomyces pombe (strain 972 / ATCC 24843) (Fission yeast).